Consider the following 292-residue polypeptide: MKLGFIGLGIMGTPMAINLARAGHQLHVTTIGPVADELLSLGAVSVETARQVTEASDIIFIMVPDTPQVEEVLFGENGCTKASLKGKTIVDMSSISPIETKRFARQVNELGGDYLDAPVSGGEIGAREGTLSIMVGGDEAVFERVKPLFELLGKNITLVGGNGDGQTCKVANQIIVALNIEAVSEALLFASKAGADPVRVRQALMGGFASSRILEVHGERMIKRTFNPGFKIALHQKDLNLALQSAKALALNLPNTATCQELFNTCAANGGSQLDHSALVQALELMANHKLA.

NAD(+)-binding positions include 4-18 (GFIGLGIMGTPMAIN) and Ser-94. The active site involves Lys-169. Lys-237 lines the NAD(+) pocket.

This sequence belongs to the HIBADH-related family.

It carries out the reaction (R)-glycerate + NADP(+) = 2-hydroxy-3-oxopropanoate + NADPH + H(+). The catalysed reaction is (R)-glycerate + NAD(+) = 2-hydroxy-3-oxopropanoate + NADH + H(+). Its pathway is organic acid metabolism; glycolate degradation; 3-phospho-D-glycerate from glycolate: step 3/4. The polypeptide is 2-hydroxy-3-oxopropionate reductase (glxR) (Escherichia coli (strain K12)).